A 321-amino-acid polypeptide reads, in one-letter code: MLTDRVLTLLAPALRASGAIVVDATVGLGGHAAAVLTAFPHVRLVGLDRDPDALERSGERLHGLAPGRVELVHAVYDEVAEILDRLGHPVVQGILFDLGVSSLQLDTDDRGFAYSRDAPLDMRMDQTRGRTAADVLNTYDADALTRILREYGEERFARRIAGAIVQARAVTPFATSARLADLVRDAIPAPARRTGGNPAKRTFQALRIEVNAELDVLARALPAAFDALAVSGRLVVLSYHSLEDRLVKRQLRGYAEASVPPDLPVVPEGAGPRLRWLTRGAEPASETEKAENPRAASVRLRAVERTAPNPDHTRKPTGGAS.

Residues Gly29–His31, Asp48, Tyr76, Asp97, and Gln104 contribute to the S-adenosyl-L-methionine site. A disordered region spans residues Leu277–Ser321.

The protein belongs to the methyltransferase superfamily. RsmH family.

The protein localises to the cytoplasm. The enzyme catalyses cytidine(1402) in 16S rRNA + S-adenosyl-L-methionine = N(4)-methylcytidine(1402) in 16S rRNA + S-adenosyl-L-homocysteine + H(+). In terms of biological role, specifically methylates the N4 position of cytidine in position 1402 (C1402) of 16S rRNA. The chain is Ribosomal RNA small subunit methyltransferase H from Frankia casuarinae (strain DSM 45818 / CECT 9043 / HFP020203 / CcI3).